Consider the following 115-residue polypeptide: Large ribosomal subunit protein eL30 (115 aa).

A phosphoserine mark is found at Ser-10 and Ser-16. The residue at position 26 (Lys-26) is an N6-acetyllysine; alternate. A Glycyl lysine isopeptide (Lys-Gly) (interchain with G-Cter in SUMO2); alternate cross-link involves residue Lys-26.

It belongs to the eukaryotic ribosomal protein eL30 family. As to quaternary structure, component of the large ribosomal subunit.

The protein resides in the cytoplasm. Component of the large ribosomal subunit. The ribosome is a large ribonucleoprotein complex responsible for the synthesis of proteins in the cell. This is Large ribosomal subunit protein eL30 (RPL30) from Homo sapiens (Human).